A 370-amino-acid chain; its full sequence is Phospho-N-acetylmuramoyl-pentapeptide-transferase (370 aa).

A run of 10 helical transmembrane segments spans residues 3–23 (QIIIAGAVSFLVAIFTTPVLI), 54–74 (GLAILAGILVAYVVAGLYGLL), 79–99 (AFTASGLLVLGLTLGLGAVGF), 118–138 (AKLISQLVLALLFGFLVLRFP), 161–181 (LAVGGTVIGTIVFLIFMYILI), 197–217 (LAAGVTAIVMGSYSLMTFWQF), 238–258 (LAVLAAAGLGGCLGFLWWNAA), 262–282 (IFMGDTGSLALGGLVAGISVT), 290–310 (IIIGALFVIETVSVVIQIVVF), and 341–361 (FWLLAAMAAMAGVAIFYGDWL).

Belongs to the glycosyltransferase 4 family. MraY subfamily. Mg(2+) serves as cofactor.

Its subcellular location is the cell membrane. It carries out the reaction UDP-N-acetyl-alpha-D-muramoyl-L-alanyl-gamma-D-glutamyl-meso-2,6-diaminopimeloyl-D-alanyl-D-alanine + di-trans,octa-cis-undecaprenyl phosphate = di-trans,octa-cis-undecaprenyl diphospho-N-acetyl-alpha-D-muramoyl-L-alanyl-D-glutamyl-meso-2,6-diaminopimeloyl-D-alanyl-D-alanine + UMP. It participates in cell wall biogenesis; peptidoglycan biosynthesis. In terms of biological role, catalyzes the initial step of the lipid cycle reactions in the biosynthesis of the cell wall peptidoglycan: transfers peptidoglycan precursor phospho-MurNAc-pentapeptide from UDP-MurNAc-pentapeptide onto the lipid carrier undecaprenyl phosphate, yielding undecaprenyl-pyrophosphoryl-MurNAc-pentapeptide, known as lipid I. The chain is Phospho-N-acetylmuramoyl-pentapeptide-transferase from Corynebacterium aurimucosum (strain ATCC 700975 / DSM 44827 / CIP 107346 / CN-1) (Corynebacterium nigricans).